The following is a 481-amino-acid chain: Two-component response regulator ORR32 (481 aa).

The 126-residue stretch at 13 to 138 (HVMLVDDDTK…TIALWRVVAW (126 aa)) folds into the Response regulatory domain. Position 66 is a 4-aspartylphosphate (Asp-66).

It belongs to the ARR family. Type-B subfamily. In terms of processing, two-component system major event consists of a His-to-Asp phosphorelay between a sensor histidine kinase (HK) and a response regulator (RR). In plants, the His-to-Asp phosphorelay involves an additional intermediate named Histidine-containing phosphotransfer protein (HPt). This multistep phosphorelay consists of a His-Asp-His-Asp sequential transfer of a phosphate group between first a His and an Asp of the HK protein, followed by the transfer to a conserved His of the HPt protein and finally the transfer to an Asp in the receiver domain of the RR protein.

Its function is as follows. Functions as a response regulator involved in His-to-Asp phosphorelay signal transduction system. Phosphorylation of the Asp residue in the receiver domain activates the ability of the protein to promote the transcription of target genes. May directly activate some type-A response regulators in response to cytokinins. In Oryza sativa subsp. japonica (Rice), this protein is Two-component response regulator ORR32.